The chain runs to 541 residues: MAKEIKYGSEARAALGAGVDKLANTVRVTLGPKGRNVVLDKSYGAPLITNDGVTIAKEVELEDAFENMGAQLVKEVATKTNDVAGDGTTTATVLTQAMVQEGMKNLEAGANPIVLRRGMKKATDKAVEALKDMSQKVKGKEQIAKVAAISAGDEEVGNLVADAMEKVTNDGVITIEESKTMQTELDLVEGMQFDRGYLSAYMCTDMDKMEAVLDDPYILITDKKISNIQDILPLLEKIVQAGARLLIIAEDVEGEALTTLIVNKLRGTFNVVAVKAPGYGDRRKAMLEDIAILTGGQVISSDLGLELKDTTIDMLGRAKSVKVQKENTVIVDGAGDKDAIAGRVSQIRGQIDETTSEFDKEKLQERLAKMAGGVAVIRVGAATETEMKEAKLRMEDALNATRAAVEEGIIAGGGSAYIHASKKVAELVDTLEGDEKTGAKVILKALEAPLYYIAANAGLEGAVIINKVKESAPGTGFNAATEEYVDMVDNGILDPVKVTRSALQNATSVASTLLTTESAVATIKEDTPAMPAGAGAGMGMM.

ATP contacts are provided by residues 29–32, 86–90, Gly-413, 478–480, and Asp-494; these read TLGP, DGTTT, and NAA.

It belongs to the chaperonin (HSP60) family. As to quaternary structure, forms a cylinder of 14 subunits composed of two heptameric rings stacked back-to-back. Interacts with the co-chaperonin GroES.

The protein resides in the cytoplasm. It catalyses the reaction ATP + H2O + a folded polypeptide = ADP + phosphate + an unfolded polypeptide.. In terms of biological role, together with its co-chaperonin GroES, plays an essential role in assisting protein folding. The GroEL-GroES system forms a nano-cage that allows encapsulation of the non-native substrate proteins and provides a physical environment optimized to promote and accelerate protein folding. The sequence is that of Chaperonin GroEL from Agathobacter rectalis (strain ATCC 33656 / DSM 3377 / JCM 17463 / KCTC 5835 / VPI 0990) (Eubacterium rectale).